Reading from the N-terminus, the 238-residue chain is DNA repair protein RecO (238 aa).

This sequence belongs to the RecO family.

Its function is as follows. Involved in DNA repair and RecF pathway recombination. The polypeptide is DNA repair protein RecO (Anaplasma marginale (strain Florida)).